The chain runs to 125 residues: Small ribosomal subunit protein uS13 (125 aa).

It belongs to the universal ribosomal protein uS13 family. In terms of assembly, part of the 30S ribosomal subunit. Forms a loose heterodimer with protein S19. Forms two bridges to the 50S subunit in the 70S ribosome.

Its function is as follows. Located at the top of the head of the 30S subunit, it contacts several helices of the 16S rRNA. In the 70S ribosome it contacts the 23S rRNA (bridge B1a) and protein L5 of the 50S subunit (bridge B1b), connecting the 2 subunits; these bridges are implicated in subunit movement. Contacts the tRNAs in the A and P-sites. The sequence is that of Small ribosomal subunit protein uS13 from Rickettsia africae (strain ESF-5).